We begin with the raw amino-acid sequence, 647 residues long: Acetyl-coenzyme A synthetase (647 aa).

CoA is bound by residues 190–193 (RGGK), threonine 310, and asparagine 334. Residues 386 to 388 (GEP), 410 to 415 (DTWWQT), aspartate 499, and arginine 514 each bind ATP. Serine 522 contributes to the CoA binding site. An ATP-binding site is contributed by arginine 525. Mg(2+) is bound by residues valine 536, histidine 538, and valine 541. CoA is bound at residue arginine 583. An N6-acetyllysine modification is found at lysine 608.

The protein belongs to the ATP-dependent AMP-binding enzyme family. Requires Mg(2+) as cofactor. Acetylated. Deacetylation by the SIR2-homolog deacetylase activates the enzyme.

The enzyme catalyses acetate + ATP + CoA = acetyl-CoA + AMP + diphosphate. Catalyzes the conversion of acetate into acetyl-CoA (AcCoA), an essential intermediate at the junction of anabolic and catabolic pathways. AcsA undergoes a two-step reaction. In the first half reaction, AcsA combines acetate with ATP to form acetyl-adenylate (AcAMP) intermediate. In the second half reaction, it can then transfer the acetyl group from AcAMP to the sulfhydryl group of CoA, forming the product AcCoA. The sequence is that of Acetyl-coenzyme A synthetase from Xanthomonas axonopodis pv. citri (strain 306).